A 126-amino-acid chain; its full sequence is FCS-Like Zinc finger 17 (126 aa).

An FLZ-type zinc finger spans residues Cys-41–Glu-85.

This sequence belongs to the FLZ family. As to quaternary structure, interacts with KIN10 and KIN11 via its FLZ-type zinc finger domain. Forms heterodimer with FLZ2 in vitro.

Its subcellular location is the nucleus. It is found in the cytoplasm. Its function is as follows. May act as an adapter to facilitate the interaction of SnRK1 complex with effector proteins, conferring tissue- and stimulus-type specific differences in the SnRK1 regulation pathway. The sequence is that of FCS-Like Zinc finger 17 from Arabidopsis thaliana (Mouse-ear cress).